The following is an 82-amino-acid chain: RNA-binding protein YbxF (82 aa).

It belongs to the eukaryotic ribosomal protein eL8 family.

This chain is RNA-binding protein YbxF, found in Geobacillus stearothermophilus (Bacillus stearothermophilus).